Here is a 568-residue protein sequence, read N- to C-terminus: MESLGLQTVRLSDGTTAYVQQAVKGEKLLEGQVIQLEDGTTAYIHQVTIQKESFSFEDGQPVQLEDGSMAYIHHTPKEGCDPSALEAVQLEDGSTAYIHHPVPVPSDSAILAVQTEAGLEDLAAEDEEGFGTDTVVALEQYASKVLHDSPASHNGKGQQVGDRAFRCGYKGCGRLYTTAHHLKVHERAHTGDRPYRCDFPSCGKAFATGYGLKSHVRTHTGEKPYKCPEELCSKAFKTSGDLQKHVRTHTGERPFRCPFEGCGRSFTTSNIRKVHVRTHTGERPYTCPEPHCGRGFTSATNYKNHVRIHTGEKPYVCTVPGCGKRFTEYSSLYKHHVVHTHCKPYTCSSCGKTYRQTSTLAMHKRSAHGELEATEESEQALYEQQQLEAASAAEESPPPKPTHIAYLSEVKEESSAIPTQVAMVTEEDGPPQVALITQDGTQQVSLSPEDLQALGSAISVVTQHGSTTLTIPGHHEELATSGTHTVTMVSADGTQTQPVTIITSGALVTEDSSVASLHHQQVALLATANGTHIAVQLEDQQTLEEAISVATAAMQQGAVTLETTESGC.

A Glycyl lysine isopeptide (Lys-Gly) (interchain with G-Cter in SUMO2) cross-link involves residue Lys-24. Repeat copies occupy residues 34 to 45 (IQLEDGTTAYIH), 62 to 73 (VQLEDGSMAYIH), and 88 to 99 (VQLEDGSTAYIH). The segment at 34 to 99 (IQLEDGTTAY…LEDGSTAYIH (66 aa)) is 3 X 12 AA approximate repeats. 7 consecutive C2H2-type zinc fingers follow at residues 165-189 (FRCG…ERAH), 195-219 (YRCD…VRTH), 225-249 (YKCP…VRTH), 255-279 (FRCP…VRTH), 285-309 (YTCP…VRIH), 315-339 (YVCT…HVVH), and 345-368 (YTCS…RSAH). Positions 365 to 402 (RSAHGELEATEESEQALYEQQQLEAASAAEESPPPKPT) are disordered. Positions 379–395 (QALYEQQQLEAASAAEE) are enriched in low complexity.

The protein belongs to the krueppel C2H2-type zinc-finger protein family.

The protein localises to the nucleus. May be involved in transcriptional regulation. This chain is Zinc finger protein 76 (Znf76), found in Mus musculus (Mouse).